The following is a 286-amino-acid chain: CBY1-interacting BAR domain-containing protein 1 (286 aa).

Residues 1–47 constitute a mitochondrion transit peptide; it reads MLRRNLDERDAQTKQLQDAVTNVEKHFGELCQIFAAYVRKTARLRDK. Residues 10–220 form a BAR-like region; it reads DAQTKQLQDA…NIDEDEDLEV (211 aa). Residues 107–178 are a coiled coil; the sequence is KMKRDDLKAT…IDNFEKQKIK (72 aa). A disordered region spans residues 258-286; that stretch reads GQISTCRTRKDQQVEDEDDEELDVTEDEN. Over residues 271 to 286 the composition is skewed to acidic residues; the sequence is VEDEDDEELDVTEDEN.

Belongs to the CIBAR family. As to quaternary structure, homodimer (via BAR-like domain). Heterodimer with FAM92B (via BAR-like domains). Interacts (via BAR-like domain) with CBY1; this interaction is required for targeting FAM92A to centriole and cilium basal body. Interacts (via BAR-like domain) with CBY3; both proteins form a ninefold symmetric structure at the flagellar base; are recruited to the annulus in a mutually dependent manner and regulate annulus positionning. As to expression, expressed in the heart, liver, spleen, lung, kidney, brain and muscle (at protein level). Strongly expressed throughout the developing limb bud, including the progress zone and the apical ectodermal ridge.

It localises to the cytoplasm. It is found in the cytoskeleton. Its subcellular location is the microtubule organizing center. The protein resides in the centrosome. The protein localises to the centriole. It localises to the cilium basal body. It is found in the cell projection. Its subcellular location is the cilium. The protein resides in the nucleus. The protein localises to the mitochondrion inner membrane. It localises to the flagellum. In terms of biological role, plays a critical role in regulating mitochondrial ultrastructure and function by maintaining the integrity of mitochondrial morphology, particularly the organization of cristae. Preferentially binds to negatively charged phospholipids like cardiolipin and phosphatidylinositol 4,5-bisphosphate enhancing its interaction with mitochondrial membranes. Induces membrane curvature and tubulation, which are critical for maintaining mitochondrial ultrastructure and the organization of cristae. Plays a crucial role in ciliogenesis. May play a role in limb development through its role in ciliogenesis. Plays a key role in the correct positioning of the annulus, a septin-based ring structure in the sperm flagellum, serving both as a physical barrier and a membrane diffusion barrier that separates the midpiece (MP) from the principal piece (PP). This positioning is essential for proper sperm motility and function. Interacts with CBY3 to form a complex which localizes to the curved membrane region of the flagellar pocket. By doing so, may provide stability and rigidity to the periannular membrane to prevent membrane deformation. This function is crucial for halting annulus migration at the proximal end of the fibrous sheath-containing PP. This chain is CBY1-interacting BAR domain-containing protein 1, found in Mus musculus (Mouse).